We begin with the raw amino-acid sequence, 356 residues long: CLIP domain-containing serine protease C9 (356 aa).

The 46-residue stretch at 49–94 folds into the Clip domain; that stretch reads SCDTPQVIGGKCMNISLCDPAFVHSIAYQEHTPVCQQNAFYRVICC. 4 disulfides stabilise this stretch: Cys-50/Cys-93, Cys-60/Cys-83, Cys-66/Cys-94, and Cys-139/Cys-155. A glycan (N-linked (GlcNAc...) asparagine) is linked at Asn-62. Residues 109-351 enclose the Peptidase S1 domain; the sequence is IMHGIEAEPG…YFGWIKETVS (243 aa). Residues His-154 and Asp-194 each act as charge relay system in the active site. Cysteines 258 and 284 form a disulfide. N-linked (GlcNAc...) asparagine glycosylation is present at Asn-292. A disulfide bridge links Cys-300 with Cys-328. Catalysis depends on Ser-304, which acts as the Charge relay system.

Belongs to the peptidase S1 family. CLIP subfamily. In terms of assembly, in the active form, heterodimer of a p12 subunit and a p30 subunit; disulfide-linked. Secreted as a full-length protein. Following bacterium E.coli infection, proteolytically cleaved into two chains, p12 and p30, which remain covalently linked.

It localises to the secreted. Probable serine protease which plays an essential role in the innate immune response against bacteria and protozoa infection by activating the melanization cascade. In the susceptible strain G3, appears to be dispensable for ookinete elimination which occurs by lysis. The chain is CLIP domain-containing serine protease C9 from Anopheles gambiae (African malaria mosquito).